Consider the following 461-residue polypeptide: FAD-dependent monooxygenase nodY2 (461 aa).

Residues Glu48 and Arg136 each coordinate FAD. Arg214 is an active-site residue. 2 residues coordinate FAD: Asp338 and Gly351.

Belongs to the paxM FAD-dependent monooxygenase family. The cofactor is FAD.

Its pathway is secondary metabolite biosynthesis. FAD-dependent monooxygenase; part of the gene cluster that mediates the biosynthesis of the indole diterpenes nodulisporic acids (NA). Nodulisporic acid A (NAA) and its chemically modified derivatives are of particular significance because of their highly potent insecticidal activity against blood-feeding arthropods and lack of observable adverse effects on mammals, in particular the tremogenicity associated with the paspaline-derived IDTs is not observed. The geranylgeranyl diphosphate (GGPP) synthase ggs1, localized outside of the cluster, is proposed to catalyze the first step in nodulisporic acid biosynthesis via conversion of farnesyl pyrophosphate and isopentyl pyrophosphate into geranylgeranyl pyrophosphate (GGPP). Condensation of indole-3-glycerol phosphate with GGPP by the prenyl transferase nodC then forms 3-geranylgeranylindole (3-GGI). Epoxidation by the FAD-dependent monooxygenase nodM leads to a single-epoxidized-GGI that is substrate of the terpene cyclase nodB for cyclization to yield emindole SB. The terminal methyl carbon, C28, of emindole SB is then oxidized by the cytochrome P450 monooxygenase nodW to produce nodulisporic acid F (NAF), the pentacyclic core of NAA. NAF is converted to nodulisporic acid E (NAE) via prenylation. This step is probably performed by one of the indole diterpene prenyltransferases nodD1 or nodD2. Several oxidation steps performed by the FAD-linked oxidoreductase nodO and one of the cytochrome P450 monooxygenase nodR, nodX or nodZ further convert NAE to nodulisporic acid D (NAD). NAD is substrate of cytochrome P450 monooxygenase nodJ to produce the precursor of nodulisporic acid C (NAC), converted to NAC by one of the indole diterpene prenyltransferases nodD1 or nodD2. The FAD-dependent monooxygenase nodY2 then oxidizes NAC to nodulisporic acid B (NAB). Finally NAB is converted to NAA by one of the cytochrome P450 monooxygenases nodR, nodX or nodZ. The protein is FAD-dependent monooxygenase nodY2 of Hypoxylon pulicicidum.